A 415-amino-acid polypeptide reads, in one-letter code: MAASTNRLRFLYSSARTVPQTGSITPISRRTYATTEPSPSATGAPATARKRTNFTDKLNAGPSFADFVSGGEDNTPLEPSEAYALKTAMVGPAGRKKEMTRLPSWLKTPIPDSKNYQRLKKDLRGLNLHTVCEEARCPNISDCWGGSDKSAATATIMLMGDTCTRGCRFCSVKTNRRPPPLDPHEPENTAEAISRWSLGYVVLTSVDRDDLADGGARHFAETVIKIKQKKPSMLVECLTGDYLGDLEMVKLVARSGLDVYAHNVETVEALTPFVRDRRATFQQSLRVLEAAKQARPDLITKTSLMLGFGETEEQLWDALRQLRSVGVDVVTFGQYMRPTKRHMPVHEYVTPDQFELWRQRALDMGFLYCASGPLVRSSYKAGEAFIENVLKKRRAAGTAGESVTDSKAAVDEATR.

The transit peptide at 1 to 32 (MAASTNRLRFLYSSARTVPQTGSITPISRRTY) directs the protein to the mitochondrion. The segment covering 20 to 32 (QTGSITPISRRTY) has biased composition (polar residues). The tract at residues 20–53 (QTGSITPISRRTYATTEPSPSATGAPATARKRTN) is disordered. The segment covering 33–47 (ATTEPSPSATGAPAT) has biased composition (low complexity). [4Fe-4S] cluster-binding residues include Cys-132, Cys-137, Cys-143, Cys-163, Cys-167, Cys-170, and Ser-378. One can recognise a Radical SAM core domain in the interval 146–367 (GSDKSAATAT…RQRALDMGFL (222 aa)). The segment at 395–415 (AAGTAGESVTDSKAAVDEATR) is disordered.

Belongs to the radical SAM superfamily. Lipoyl synthase family. It depends on [4Fe-4S] cluster as a cofactor.

It is found in the mitochondrion. It catalyses the reaction [[Fe-S] cluster scaffold protein carrying a second [4Fe-4S](2+) cluster] + N(6)-octanoyl-L-lysyl-[protein] + 2 oxidized [2Fe-2S]-[ferredoxin] + 2 S-adenosyl-L-methionine + 4 H(+) = [[Fe-S] cluster scaffold protein] + N(6)-[(R)-dihydrolipoyl]-L-lysyl-[protein] + 4 Fe(3+) + 2 hydrogen sulfide + 2 5'-deoxyadenosine + 2 L-methionine + 2 reduced [2Fe-2S]-[ferredoxin]. The protein operates within protein modification; protein lipoylation via endogenous pathway; protein N(6)-(lipoyl)lysine from octanoyl-[acyl-carrier-protein]: step 2/2. Catalyzes the radical-mediated insertion of two sulfur atoms into the C-6 and C-8 positions of the octanoyl moiety bound to the lipoyl domains of lipoate-dependent enzymes, thereby converting the octanoylated domains into lipoylated derivatives. This Aspergillus flavus (strain ATCC 200026 / FGSC A1120 / IAM 13836 / NRRL 3357 / JCM 12722 / SRRC 167) protein is Lipoyl synthase, mitochondrial.